Consider the following 92-residue polypeptide: Small ribosomal subunit protein bS20 (92 aa).

It belongs to the bacterial ribosomal protein bS20 family.

Functionally, binds directly to 16S ribosomal RNA. In Magnetococcus marinus (strain ATCC BAA-1437 / JCM 17883 / MC-1), this protein is Small ribosomal subunit protein bS20.